Reading from the N-terminus, the 59-residue chain is Large ribosomal subunit protein bL32 (59 aa).

Belongs to the bacterial ribosomal protein bL32 family.

This is Large ribosomal subunit protein bL32 from Mesoplasma florum (strain ATCC 33453 / NBRC 100688 / NCTC 11704 / L1) (Acholeplasma florum).